Here is a 115-residue protein sequence, read N- to C-terminus: Phosphoribosyl-AMP cyclohydrolase (115 aa).

Asp-80 contributes to the Mg(2+) binding site. Cys-81 provides a ligand contact to Zn(2+). Mg(2+) is bound by residues Asp-82 and Asp-84. Positions 97 and 104 each coordinate Zn(2+).

It belongs to the PRA-CH family. In terms of assembly, homodimer. Mg(2+) is required as a cofactor. Zn(2+) serves as cofactor.

It is found in the cytoplasm. It catalyses the reaction 1-(5-phospho-beta-D-ribosyl)-5'-AMP + H2O = 1-(5-phospho-beta-D-ribosyl)-5-[(5-phospho-beta-D-ribosylamino)methylideneamino]imidazole-4-carboxamide. Its pathway is amino-acid biosynthesis; L-histidine biosynthesis; L-histidine from 5-phospho-alpha-D-ribose 1-diphosphate: step 3/9. Catalyzes the hydrolysis of the adenine ring of phosphoribosyl-AMP. The chain is Phosphoribosyl-AMP cyclohydrolase from Mycolicibacterium paratuberculosis (strain ATCC BAA-968 / K-10) (Mycobacterium paratuberculosis).